Reading from the N-terminus, the 391-residue chain is Putative 12-oxophytodienoate reductase 6 (391 aa).

FMN-binding positions include P42–T44, A75, and Q117. H189–N192 provides a ligand contact to substrate. Y194 serves as the catalytic Proton donor. An FMN-binding site is contributed by R241. R282 lines the substrate pocket. FMN-binding positions include G312 and G333–R334. Positions Y372–A391 are disordered. Residues D382–A391 show a composition bias toward acidic residues.

Belongs to the NADH:flavin oxidoreductase/NADH oxidase family. The cofactor is FMN.

Its function is as follows. Putative oxophytodienoate reductase that may be involved in the biosynthesis or metabolism of oxylipin signaling molecules. This Oryza sativa subsp. japonica (Rice) protein is Putative 12-oxophytodienoate reductase 6 (OPR6).